Consider the following 1510-residue polypeptide: ABC transporter C family MRP4 (1510 aa).

A run of 12 helical transmembrane segments spans residues E12–L32, P55–W75, A78–V98, A109–Q129, F138–Y158, M177–G197, T319–V339, L342–A362, W373–Y393, A427–L447, I453–A473, and F540–L560. The 276-residue stretch at F320–Q595 folds into the ABC transmembrane type-1 1 domain. The ABC transporter 1 domain maps to V629 to A852. An ATP-binding site is contributed by G664–S671. Positions L889–R925 are disordered. Positions K906–R918 are enriched in basic residues. Transmembrane regions (helical) follow at residues G945–S965, S985–M1005, I1060–S1082, W1086–A1108, L1154–L1174, and L1179–I1199. Residues L950 to R1220 enclose the ABC transmembrane type-1 2 domain. The 235-residue stretch at I1267–S1501 folds into the ABC transporter 2 domain. Residue G1301–S1308 coordinates ATP.

The protein belongs to the ABC transporter superfamily. ABCC family. Conjugate transporter (TC 3.A.1.208) subfamily. Expressed in roots, leaves, stalks, tassels, silks, developing seeds and developing embryos.

The protein localises to the membrane. ABC transporter that may affect phytic acid transport and compartmentalization. May function directly or indirectly in removing phytic acid from the cytosol or in vesicle trafficking. Required for phytic acid accumulation in developing seeds. Phytic acid is the primary storage form of phosphorus in cereal grains and other plant seeds. The protein is ABC transporter C family MRP4 of Zea mays (Maize).